We begin with the raw amino-acid sequence, 534 residues long: Glutamyl-tRNA(Gln) amidotransferase subunit B, mitochondrial (534 aa).

The transit peptide at 1 to 28 (MTVLCRLRHCHLSTPTLCRRFHDARVYK) directs the protein to the mitochondrion.

It belongs to the GatB/GatE family. GatB subfamily. In terms of assembly, subunit of the heterotrimeric GatCAB amidotransferase (AdT) complex, composed of A, B and C subunits.

It localises to the mitochondrion. It catalyses the reaction L-glutamyl-tRNA(Gln) + L-glutamine + ATP + H2O = L-glutaminyl-tRNA(Gln) + L-glutamate + ADP + phosphate + H(+). In terms of biological role, allows the formation of correctly charged Gln-tRNA(Gln) through the transamidation of misacylated Glu-tRNA(Gln) in the mitochondria. The reaction takes place in the presence of glutamine and ATP through an activated gamma-phospho-Glu-tRNA(Gln). This chain is Glutamyl-tRNA(Gln) amidotransferase subunit B, mitochondrial, found in Laccaria bicolor (strain S238N-H82 / ATCC MYA-4686) (Bicoloured deceiver).